The primary structure comprises 95 residues: Antitoxin VapB41 (95 aa).

In terms of biological role, antitoxin component of a type II toxin-antitoxin (TA) system. This is Antitoxin VapB41 (vapB41) from Mycobacterium tuberculosis (strain CDC 1551 / Oshkosh).